Here is a 442-residue protein sequence, read N- to C-terminus: Protein bangles and beads (442 aa).

Residues 47 to 442 form a disordered region; the sequence is AVEPAPLKPE…SEESSESKEN (396 aa). Composition is skewed to basic and acidic residues over residues 55 to 67, 114 to 125, and 133 to 146; these read PEAE…KTIE, PEKKTLPEEAKP, and EAEK…RTEA. Low complexity predominate over residues 159 to 172; that stretch reads AIEQAPEAPAANAE. Basic and acidic residues-rich tracts occupy residues 177–194 and 204–240; these read VVDE…KSAE and AEKE…EPAK. 2 stretches are compositionally biased toward low complexity: residues 241 to 255 and 272 to 288; these read AAEA…AATK and SSPA…AAQA. Residues 329–339 are compositionally biased toward basic and acidic residues; it reads EAVKEQEKEQP. Residues 357 to 376 are compositionally biased toward low complexity; the sequence is TAAPAGAPEPTAAVAPAAVP. Over residues 408-442 the composition is skewed to basic and acidic residues; the sequence is EPKKSSEEKSDKSESKVDESSESKESEESSESKEN. Residues S430, S433, S436, and S437 each carry the phosphoserine modification.

In terms of tissue distribution, expressed in the embryonic CNS, in sets of cells that are segmentally reiterated along the periphery of the nervous system.

Its function is as follows. May play an important role during development. This Drosophila melanogaster (Fruit fly) protein is Protein bangles and beads (bnb).